Consider the following 208-residue polypeptide: Putative 3-methyladenine DNA glycosylase (208 aa).

The protein belongs to the DNA glycosylase MPG family.

The chain is Putative 3-methyladenine DNA glycosylase from Prosthecochloris aestuarii (strain DSM 271 / SK 413).